The following is a 165-amino-acid chain: ER membrane protein complex subunit 5 (165 aa).

At 1–3 (MAP) the chain is on the cytoplasmic side. A helical transmembrane segment spans residues 4–22 (SLWKGLVGIGLFALAHAAF). The Lumenal portion of the chain corresponds to 23-77 (SAAQHYFPSSGIKWKRKCEFLQSSSFQDKIFRSMYYVYDRSYMRLTEKEDESLPI). The chain crosses the membrane as a helical span at residues 78–97 (DIVLQTLLAFAVTCYGIVHI). Over 98-165 (AGEFKDMDAT…KLRKLESLRR (68 aa)) the chain is Cytoplasmic. Position 154 is a phosphoserine (Ser-154).

The protein belongs to the membrane magnesium transporter (TC 1.A.67) family. As to quaternary structure, component of the ER membrane protein complex (EMC).

It is found in the endoplasmic reticulum membrane. The protein localises to the golgi apparatus membrane. The protein resides in the early endosome membrane. In terms of biological role, part of the endoplasmic reticulum membrane protein complex (EMC) that enables the energy-independent insertion into endoplasmic reticulum membranes of newly synthesized membrane proteins. Preferentially accommodates proteins with transmembrane domains that are weakly hydrophobic or contain destabilizing features such as charged and aromatic residues. Involved in the cotranslational insertion of multi-pass membrane proteins in which stop-transfer membrane-anchor sequences become ER membrane spanning helices. It is also required for the post-translational insertion of tail-anchored/TA proteins in endoplasmic reticulum membranes. By mediating the proper cotranslational insertion of N-terminal transmembrane domains in an N-exo topology, with translocated N-terminus in the lumen of the ER, controls the topology of multi-pass membrane proteins like the G protein-coupled receptors. By regulating the insertion of various proteins in membranes, it is indirectly involved in many cellular processes. May be involved in Mg(2+) transport. In Bos taurus (Bovine), this protein is ER membrane protein complex subunit 5.